The primary structure comprises 292 residues: MAAITASMVAELRAKTDAPMMECKKALTEADGDLNKAEELLRVKLGNKASKAASRVTAEGVVASFIDGTTGVLVELNCETDFVSKNDDFLAFSAKVAELIAKQNPADVAALSALELDGVSVEATRTALIGKIGENLTIRRFVRYANGGKLVSYLHGTRIGVMVEFDGDEAAAKDVAMHVAAMKPVSLSAEQVPADLIAKERSIAEQKAAESGKPAEIAAKMVEGSVQKYLKEVSLFNQPFVKNDKQTVEQMLKAANTTVKGFTLYVVGEGIEKKQDDFAAEVAAQVAAAQKG.

Positions 80–83 (TDFV) are involved in Mg(2+) ion dislocation from EF-Tu.

This sequence belongs to the EF-Ts family.

It localises to the cytoplasm. In terms of biological role, associates with the EF-Tu.GDP complex and induces the exchange of GDP to GTP. It remains bound to the aminoacyl-tRNA.EF-Tu.GTP complex up to the GTP hydrolysis stage on the ribosome. This is Elongation factor Ts from Cupriavidus pinatubonensis (strain JMP 134 / LMG 1197) (Cupriavidus necator (strain JMP 134)).